The sequence spans 325 residues: Cytochrome c1, heme protein, mitochondrial (325 aa).

The transit peptide at 1-84 directs the protein to the mitochondrion; that stretch reads MAAAAASLRR…AVALHSAVSA (84 aa). Topologically, residues 85-287 are mitochondrial intermembrane; sequence SDLELHPPSY…SEPEHDHRKR (203 aa). A Cytochrome c domain is found at 108 to 209; sequence TSIRRGFQVY…IVRARHGGED (102 aa). Residues cysteine 121, cysteine 124, histidine 125, and methionine 244 each contribute to the heme c site. Residues 288–308 form a helical membrane-spanning segment; it reads MGLKMLLMMGLLLPLTYAMKR. At 309–325 the chain is on the mitochondrial matrix side; that stretch reads HKWSVLKSRKLAYRPPK.

It belongs to the cytochrome c family. As to quaternary structure, component of the ubiquinol-cytochrome c oxidoreductase (cytochrome b-c1 complex, complex III, CIII), a multisubunit enzyme composed of 11 subunits. The complex is composed of 3 respiratory subunits cytochrome b, cytochrome c1 and Rieske protein UQCRFS1, 2 core protein subunits UQCRC1/QCR1 and UQCRC2/QCR2, and 6 low-molecular weight protein subunits UQCRH/QCR6, UQCRB/QCR7, UQCRQ/QCR8, UQCR10/QCR9, UQCR11/QCR10 and subunit 9, the cleavage product of Rieske protein UQCRFS1. The complex exists as an obligatory dimer and forms supercomplexes (SCs) in the inner mitochondrial membrane with NADH-ubiquinone oxidoreductase (complex I, CI) and cytochrome c oxidase (complex IV, CIV), resulting in different assemblies (supercomplex SCI(1)III(2)IV(1) and megacomplex MCI(2)III(2)IV(2)). Interacts with FLVCR2; this interaction occurs in the absence of heme and is disrupted upon heme binding. It depends on heme c as a cofactor.

It localises to the mitochondrion inner membrane. The enzyme catalyses a quinol + 2 Fe(III)-[cytochrome c](out) = a quinone + 2 Fe(II)-[cytochrome c](out) + 2 H(+)(out). Functionally, component of the ubiquinol-cytochrome c oxidoreductase, a multisubunit transmembrane complex that is part of the mitochondrial electron transport chain which drives oxidative phosphorylation. The respiratory chain contains 3 multisubunit complexes succinate dehydrogenase (complex II, CII), ubiquinol-cytochrome c oxidoreductase (cytochrome b-c1 complex, complex III, CIII) and cytochrome c oxidase (complex IV, CIV), that cooperate to transfer electrons derived from NADH and succinate to molecular oxygen, creating an electrochemical gradient over the inner membrane that drives transmembrane transport and the ATP synthase. The cytochrome b-c1 complex catalyzes electron transfer from ubiquinol to cytochrome c, linking this redox reaction to translocation of protons across the mitochondrial inner membrane, with protons being carried across the membrane as hydrogens on the quinol. In the process called Q cycle, 2 protons are consumed from the matrix, 4 protons are released into the intermembrane space and 2 electrons are passed to cytochrome c. Cytochrome c1 is a catalytic core subunit containing a c-type heme. It transfers electrons from the [2Fe-2S] iron-sulfur cluster of the Rieske protein to cytochrome c. The sequence is that of Cytochrome c1, heme protein, mitochondrial (Cyc1) from Mus musculus (Mouse).